The sequence spans 219 residues: Large ribosomal subunit protein bL25 (219 aa).

Positions 195–219 are disordered; sequence EETTTTETSNEPEVIKKGKKEEEEK. Over residues 197–206 the composition is skewed to low complexity; the sequence is TTTTETSNEP. The segment covering 207 to 219 has biased composition (basic and acidic residues); the sequence is EVIKKGKKEEEEK.

This sequence belongs to the bacterial ribosomal protein bL25 family. CTC subfamily. As to quaternary structure, part of the 50S ribosomal subunit; part of the 5S rRNA/L5/L18/L25 subcomplex. Contacts the 5S rRNA. Binds to the 5S rRNA independently of L5 and L18.

This is one of the proteins that binds to the 5S RNA in the ribosome where it forms part of the central protuberance. The protein is Large ribosomal subunit protein bL25 of Fervidobacterium nodosum (strain ATCC 35602 / DSM 5306 / Rt17-B1).